The primary structure comprises 390 residues: L-rhamnonate dehydratase (390 aa).

Residues His19 and Arg45 each contribute to the substrate site. Asp211, Glu237, and Glu265 together coordinate Mg(2+). His315 (proton acceptor) is an active-site residue. Glu335 lines the substrate pocket.

It belongs to the mandelate racemase/muconate lactonizing enzyme family. RhamD subfamily. Mg(2+) serves as cofactor.

It carries out the reaction L-rhamnonate = 2-dehydro-3-deoxy-L-rhamnonate + H2O. Functionally, catalyzes the dehydration of L-rhamnonate to 2-keto-3-deoxy-L-rhamnonate (KDR). The chain is L-rhamnonate dehydratase from Saccharopolyspora erythraea (strain ATCC 11635 / DSM 40517 / JCM 4748 / NBRC 13426 / NCIMB 8594 / NRRL 2338).